An 82-amino-acid polypeptide reads, in one-letter code: Apovitellenin-1 (82 aa).

The protein belongs to the apovitellenin family. In terms of assembly, monomer. Found in egg yolk and in plasma.

Functionally, protein component of the very low density lipoprotein (VLDL) of egg-laying females. Potent lipoprotein lipase inhibitor, preventing the loss of triglycerides from VLDL on their way from the liver to the growing oocytes. In Anas platyrhynchos (Mallard), this protein is Apovitellenin-1.